Reading from the N-terminus, the 161-residue chain is MVKKKSKQKAGSNTIALNKKARHEYFIDDEIEAGMELQGWEVKALRQGKANIAESYVFMRDGEAFVSGMTITPLNQASTHVVANPTRVRKLLMSRRELDNLLGRINREGMTLAALSLYWSRSWVKIKIGVAKGKKLHDKRTDLKEKDWAREKARVMKSSLR.

The protein belongs to the SmpB family.

It localises to the cytoplasm. In terms of biological role, required for rescue of stalled ribosomes mediated by trans-translation. Binds to transfer-messenger RNA (tmRNA), required for stable association of tmRNA with ribosomes. tmRNA and SmpB together mimic tRNA shape, replacing the anticodon stem-loop with SmpB. tmRNA is encoded by the ssrA gene; the 2 termini fold to resemble tRNA(Ala) and it encodes a 'tag peptide', a short internal open reading frame. During trans-translation Ala-aminoacylated tmRNA acts like a tRNA, entering the A-site of stalled ribosomes, displacing the stalled mRNA. The ribosome then switches to translate the ORF on the tmRNA; the nascent peptide is terminated with the 'tag peptide' encoded by the tmRNA and targeted for degradation. The ribosome is freed to recommence translation, which seems to be the essential function of trans-translation. This is SsrA-binding protein from Vibrio campbellii (strain ATCC BAA-1116).